A 321-amino-acid chain; its full sequence is Glycerol-3-phosphate phosphatase (321 aa).

Residue Asp-34 is the Nucleophile of the active site. Mg(2+) is bound by residues Asp-34, Asp-36, and Asp-260. Catalysis depends on Asp-36, which acts as the Proton donor.

The protein belongs to the HAD-like hydrolase superfamily. CbbY/CbbZ/Gph/YieH family. In terms of assembly, homodimer. It depends on Mg(2+) as a cofactor. Expression was confirmed in liver, adipose tissue, testis and pancreatic islet.

It catalyses the reaction O-phospho-L-tyrosyl-[protein] + H2O = L-tyrosyl-[protein] + phosphate. The catalysed reaction is sn-glycerol 1-phosphate + H2O = glycerol + phosphate. It carries out the reaction sn-glycerol 3-phosphate + H2O = glycerol + phosphate. Glycerol-3-phosphate phosphatase hydrolyzing glycerol-3-phosphate into glycerol. Thereby, regulates the cellular levels of glycerol-3-phosphate a metabolic intermediate of glucose, lipid and energy metabolism. Was also shown to have a 2-phosphoglycolate phosphatase activity and a tyrosine-protein phosphatase activity. However, their physiological relevance is unclear. In vitro, also has a phosphatase activity toward ADP, ATP, GDP and GTP. The protein is Glycerol-3-phosphate phosphatase of Rattus norvegicus (Rat).